Reading from the N-terminus, the 704-residue chain is Penicillin-binding protein H (704 aa).

The helical transmembrane segment at 23–43 (FFLAVFVLFTALIFKLGVVQI) threads the bilayer. The interval 197-223 (MNPNKSNSNGKNGALLDEKKNSSQRPK) is disordered. Over residues 200-209 (NKSNSNGKNG) the composition is skewed to low complexity. A compositionally biased stretch (basic and acidic residues) spans 212 to 223 (LDEKKNSSQRPK). The active-site Acyl-ester intermediate is the S415.

Belongs to the transpeptidase family.

Its subcellular location is the cell membrane. It catalyses the reaction Preferential cleavage: (Ac)2-L-Lys-D-Ala-|-D-Ala. Also transpeptidation of peptidyl-alanyl moieties that are N-acyl substituents of D-alanine.. Its pathway is cell wall biogenesis; peptidoglycan biosynthesis. Involved in the polymerization of peptidoglycan. Plays a redundant role with PBP-2A (pbpA) in determining the rod shape of the cell during vegetative growth and spore outgrowth. In Bacillus subtilis (strain 168), this protein is Penicillin-binding protein H.